A 129-amino-acid chain; its full sequence is Small ribosomal subunit protein uS9 (129 aa).

It belongs to the universal ribosomal protein uS9 family.

The chain is Small ribosomal subunit protein uS9 from Chlorobium limicola (strain DSM 245 / NBRC 103803 / 6330).